Reading from the N-terminus, the 68-residue chain is MSAEERLIELEIRVAEQEKTIDELSSVLTEQWKTVDQLSKKLNALTNRFLELKEQAAPDVPVTKPPHW.

Belongs to the SlyX family.

This Brucella suis (strain ATCC 23445 / NCTC 10510) protein is Protein SlyX homolog.